Consider the following 376-residue polypeptide: Chaperone protein DnaJ (376 aa).

Residues D5–G70 form the J domain. A CR-type zinc finger spans residues G134–T212. Zn(2+) is bound by residues C147, C150, C164, C167, C186, C189, C200, and C203. CXXCXGXG motif repeat units lie at residues C147–G154, C164–G171, C186–G193, and C200–G207.

This sequence belongs to the DnaJ family. In terms of assembly, homodimer. The cofactor is Zn(2+).

The protein resides in the cytoplasm. Participates actively in the response to hyperosmotic and heat shock by preventing the aggregation of stress-denatured proteins and by disaggregating proteins, also in an autonomous, DnaK-independent fashion. Unfolded proteins bind initially to DnaJ; upon interaction with the DnaJ-bound protein, DnaK hydrolyzes its bound ATP, resulting in the formation of a stable complex. GrpE releases ADP from DnaK; ATP binding to DnaK triggers the release of the substrate protein, thus completing the reaction cycle. Several rounds of ATP-dependent interactions between DnaJ, DnaK and GrpE are required for fully efficient folding. Also involved, together with DnaK and GrpE, in the DNA replication of plasmids through activation of initiation proteins. The sequence is that of Chaperone protein DnaJ from Alcanivorax borkumensis (strain ATCC 700651 / DSM 11573 / NCIMB 13689 / SK2).